The following is a 658-amino-acid chain: Integrator complex subunit 9 (658 aa).

Lysine 58 is covalently cross-linked (Glycyl lysine isopeptide (Lys-Gly) (interchain with G-Cter in SUMO2)). The interval 548–572 (DNKHVLQPPPKPTQPTSSKKRKRVN) is disordered. Residues 566-570 (KKRKR) carry the Nuclear localization signal motif.

The protein belongs to the metallo-beta-lactamase superfamily. RNA-metabolizing metallo-beta-lactamase-like family. INTS9 subfamily. Component of the Integrator complex, composed of core subunits INTS1, INTS2, INTS3, INTS4, INTS5, INTS6, INTS7, INTS8, INTS9/RC74, INTS10, INTS11/CPSF3L, INTS12, INTS13, INTS14 and INTS15. The core complex associates with protein phosphatase 2A subunits PPP2CA and PPP2R1A, to form the Integrator-PP2A (INTAC) complex. INTS9 is part of the RNA endonuclease subcomplex, composed of INTS4, INTS9, INTS11 and inositol hexakisphosphate (InsP6). Interacts with WDR73; interaction is required for the assembly of the RNA endonuclease subcomplex in the cytoplasm. Interacts with BRAT1; interaction is required for the assembly of the RNA endonuclease subcomplex. Interacts with ESRRB, ESRRB is not a core component of the Integrator complex and this association is a bridge for the interaction with the multiprotein complex Integrator; attracts the transcriptional machinery.

The protein localises to the nucleus. It localises to the cytoplasm. In terms of biological role, component of the integrator complex, a multiprotein complex that terminates RNA polymerase II (Pol II) transcription in the promoter-proximal region of genes. The integrator complex provides a quality checkpoint during transcription elongation by driving premature transcription termination of transcripts that are unfavorably configured for transcriptional elongation: the complex terminates transcription by (1) catalyzing dephosphorylation of the C-terminal domain (CTD) of Pol II subunit POLR2A/RPB1 and SUPT5H/SPT5, (2) degrading the exiting nascent RNA transcript via endonuclease activity and (3) promoting the release of Pol II from bound DNA. The integrator complex is also involved in terminating the synthesis of non-coding Pol II transcripts, such as enhancer RNAs (eRNAs), small nuclear RNAs (snRNAs), telomerase RNAs and long non-coding RNAs (lncRNAs). Mediates recruitment of cytoplasmic dynein to the nuclear envelope, probably as component of the integrator complex. This Mus musculus (Mouse) protein is Integrator complex subunit 9 (Ints9).